Here is a 431-residue protein sequence, read N- to C-terminus: UDP-N-acetylmuramoylalanine--D-glutamate ligase (431 aa).

Residue 111–117 (GTDGKST) coordinates ATP.

This sequence belongs to the MurCDEF family.

The protein localises to the cytoplasm. The catalysed reaction is UDP-N-acetyl-alpha-D-muramoyl-L-alanine + D-glutamate + ATP = UDP-N-acetyl-alpha-D-muramoyl-L-alanyl-D-glutamate + ADP + phosphate + H(+). Its pathway is cell wall biogenesis; peptidoglycan biosynthesis. Cell wall formation. Catalyzes the addition of glutamate to the nucleotide precursor UDP-N-acetylmuramoyl-L-alanine (UMA). In Petrotoga mobilis (strain DSM 10674 / SJ95), this protein is UDP-N-acetylmuramoylalanine--D-glutamate ligase.